The chain runs to 70 residues: Large ribosomal subunit protein eL38 (70 aa).

The protein belongs to the eukaryotic ribosomal protein eL38 family.

The polypeptide is Large ribosomal subunit protein eL38 (RPL38) (Artemia franciscana (Brine shrimp)).